Consider the following 122-residue polypeptide: Protein FLORAL ORGAN NUMBER2 (122 aa).

A signal peptide spans 1–25; that stretch reads MGRLFLCLVVAWCWVALLLVAPVHG. A disordered region spans residues 28 to 122; the sequence is GLPGEFSGDQ…PEHARSTGRP (95 aa). A compositionally biased stretch (basic residues) spans 54 to 63; sequence KQPRGVKGTR. Over residues 64 to 77 the composition is skewed to low complexity; sequence RPSWSSWSSTASRS. Over residues 111-122 the composition is skewed to basic and acidic residues; that stretch reads RRPEHARSTGRP.

Belongs to the CLV3/ESR signal peptide family.

It localises to the secreted. Its function is as follows. Probable extracellular signal that regulates meristem maintenance. May function as a putative ligand for a receptor complex including FON1. Regulates the size of the floral meristem and the number of floral organs. This is Protein FLORAL ORGAN NUMBER2 (FON2) from Oryza sativa subsp. indica (Rice).